A 59-amino-acid chain; its full sequence is Embryonic testis differentiation protein (59 aa).

Positions 1–28 are disordered; it reads MDEKNPEAVPRPPEQNTELVPPKKSKSK.

As to expression, specifically expressed in testis.

The polypeptide is Embryonic testis differentiation protein (Mus musculus (Mouse)).